Here is a 329-residue protein sequence, read N- to C-terminus: Adenylate isopentenyltransferase (329 aa).

ATP contacts are provided by residues 37–44 (GATGTGKS), lysine 63, threonine 74, 129–131 (SNS), 220–222 (KAI), and lysine 313.

It belongs to the IPP transferase family. It depends on Mg(2+) as a cofactor. Expressed in roots, stems, leaves and cones.

It catalyses the reaction dimethylallyl diphosphate + AMP = N(6)-(dimethylallyl)adenosine 5'-phosphate + diphosphate. The enzyme catalyses dimethylallyl diphosphate + ADP = N(6)-(dimethylallyl)adenosine 5'-diphosphate + diphosphate. The catalysed reaction is dimethylallyl diphosphate + ATP = N(6)-(dimethylallyl)adenosine 5'-triphosphate + diphosphate. Functionally, involved in cytokinin biosynthesis. Catalyzes the transfer of an isopentenyl group from dimethylallyl diphosphate (DMAPP) to ATP, ADP and AMP. GMP, IMP, CMP or UMP are not used as substrates. The chain is Adenylate isopentenyltransferase from Humulus lupulus (European hop).